Here is a 228-residue protein sequence, read N- to C-terminus: Imidazole glycerol phosphate synthase subunit HisH (228 aa).

The Glutamine amidotransferase type-1 domain maps to 4–218; sequence DIAVVDYGMG…VTWNPGEHAS (215 aa). Residue Cys-83 is the Nucleophile of the active site. Residues His-193 and Glu-195 contribute to the active site.

Heterodimer of HisH and HisF.

It is found in the cytoplasm. The catalysed reaction is 5-[(5-phospho-1-deoxy-D-ribulos-1-ylimino)methylamino]-1-(5-phospho-beta-D-ribosyl)imidazole-4-carboxamide + L-glutamine = D-erythro-1-(imidazol-4-yl)glycerol 3-phosphate + 5-amino-1-(5-phospho-beta-D-ribosyl)imidazole-4-carboxamide + L-glutamate + H(+). It carries out the reaction L-glutamine + H2O = L-glutamate + NH4(+). Its pathway is amino-acid biosynthesis; L-histidine biosynthesis; L-histidine from 5-phospho-alpha-D-ribose 1-diphosphate: step 5/9. Its function is as follows. IGPS catalyzes the conversion of PRFAR and glutamine to IGP, AICAR and glutamate. The HisH subunit catalyzes the hydrolysis of glutamine to glutamate and ammonia as part of the synthesis of IGP and AICAR. The resulting ammonia molecule is channeled to the active site of HisF. This Thiobacillus denitrificans (strain ATCC 25259 / T1) protein is Imidazole glycerol phosphate synthase subunit HisH.